Reading from the N-terminus, the 485-residue chain is Iroquois-class homeodomain protein IRX-4 (485 aa).

A DNA-binding region (homeobox; TALE-type) is located at residues 142–203; that stretch reads GTRRKNATRE…NARRRLKKEN (62 aa). Residues 206–313 are disordered; sequence TWPPRNKCSD…EEEEAAERAR (108 aa). Residues 221-232 show a composition bias toward acidic residues; that stretch reads EEEEEEEEECSQ. Positions 234 to 253 are enriched in basic and acidic residues; it reads DAMKSEKAEEPTGKEEKELE. Residues 254 to 269 are compositionally biased toward acidic residues; it reads LSDLEDLDAAESESSE. Pro residues predominate over residues 282-294; the sequence is HPLPGGGPPPRAA.

The protein belongs to the TALE/IRO homeobox family. Ventricles of the heart, developing feather buds, retina, hindbrain.

The protein resides in the nucleus. In terms of biological role, regulates the chamber-specific expression of myosin isoforms by activating the expression of the ventricle myosin heavy chain-1 (Vmhc1) and suppressing the expression of the atrial myosin heavy chain-1 (Amhc1) in the ventricles. May play a critical role in establishing chamber-specific gene expression in the developing heart. In Gallus gallus (Chicken), this protein is Iroquois-class homeodomain protein IRX-4 (IRX4).